A 63-amino-acid chain; its full sequence is Large ribosomal subunit protein uL29 (63 aa).

The protein belongs to the universal ribosomal protein uL29 family.

This is Large ribosomal subunit protein uL29 from Marinomonas sp. (strain MWYL1).